Reading from the N-terminus, the 315-residue chain is MSLPIVYIDGDQGTTGLQIHERLRDRTDLRLVTLPDAERKDPARRAEAINASDIAILCLPDAAAREAVGFIRNPAVRVIDASSAHRTEPDWVYGFPEMVDGHAQTIAHARRVTNPGCYPTGAVGLLRPLQQAGLLPRDYPVCIHAVSGYSGGGRAAVDAFESNGAARAQPLQVYGLALAHKHVPEIQLHAGLAHRPLFVPAYGAYRQGIVLTVPIELRLLPAGVTGEALHACLAHHYAGARRVEVTPLADTRAITHLDPQALNGSNDLRLSVFVNAEHGQVLLAAVFDNLGKGASGAAVQNLDLMLGVASAVKAA.

Cysteine 117 is an active-site residue.

Belongs to the NAGSA dehydrogenase family. Type 2 subfamily.

The protein resides in the cytoplasm. The enzyme catalyses N-acetyl-L-glutamate 5-semialdehyde + phosphate + NADP(+) = N-acetyl-L-glutamyl 5-phosphate + NADPH + H(+). It participates in amino-acid biosynthesis; L-arginine biosynthesis; N(2)-acetyl-L-ornithine from L-glutamate: step 3/4. Its function is as follows. Catalyzes the NADPH-dependent reduction of N-acetyl-5-glutamyl phosphate to yield N-acetyl-L-glutamate 5-semialdehyde. This chain is N-acetyl-gamma-glutamyl-phosphate reductase, found in Burkholderia ambifaria (strain ATCC BAA-244 / DSM 16087 / CCUG 44356 / LMG 19182 / AMMD) (Burkholderia cepacia (strain AMMD)).